The primary structure comprises 225 residues: Urease accessory protein UreF (225 aa).

This sequence belongs to the UreF family. UreD, UreF and UreG form a complex that acts as a GTP-hydrolysis-dependent molecular chaperone, activating the urease apoprotein by helping to assemble the nickel containing metallocenter of UreC. The UreE protein probably delivers the nickel.

It localises to the cytoplasm. Required for maturation of urease via the functional incorporation of the urease nickel metallocenter. The polypeptide is Urease accessory protein UreF (Geobacillus kaustophilus (strain HTA426)).